The sequence spans 362 residues: Putative gustatory receptor 89a (362 aa).

The Cytoplasmic segment spans residues 1-38; sequence MLRFPHVCGLCLLLKYWQILALAPFRTSEPMVARCQRW. Residues 39–59 form a helical membrane-spanning segment; it reads MTLIAVFRWLLLTSMAPFVLW. Residues 60 to 74 are Extracellular-facing; it reads KSAAMYEATNVRHSM. Residues 75–95 traverse the membrane as a helical segment; it reads VFKTIALATMTGDVCISLALL. Topologically, residues 96 to 126 are cytoplasmic; that stretch reads GNHLWNRRELANLVNDLARLHRRRRLSWWST. The helical transmembrane segment at 127–147 threads the bilayer; that stretch reads LFLWLKLLLSLYDLLCSVPFL. Over 148–166 the chain is Extracellular; sequence KGAGGRLPWSQLVAYGVQL. A helical membrane pass occupies residues 167–187; sequence YFQHVASVYGNGIFGGILLML. Residues 188-223 are Cytoplasmic-facing; sequence ECYNQLEREEPTNLARLLQKEYSWLRLIQRFVKLFQ. The helical transmembrane segment at 224–244 threads the bilayer; the sequence is LGIFLLVLGSFVNIMVNIYAF. At 245–255 the chain is on the extracellular side; the sequence is MSYYVSLHGVP. A helical membrane pass occupies residues 256 to 276; sequence LTISNNCLVLAIQLYAVILAA. Residues 277–333 are Cytoplasmic-facing; sequence HLCQVRSAKLRKKCLQLEYVPEGLTQEQAMASTPFPVLTPTGNVKFRILGVFILDNS. A helical transmembrane segment spans residues 334–354; the sequence is FWLFLVSYAMNFIVVILQTSF. Residues 355–362 lie on the Extracellular side of the membrane; the sequence is EHINHGEI.

This sequence belongs to the insect chemoreceptor superfamily. Gustatory receptor (GR) family. Gr77a subfamily.

The protein localises to the cell membrane. Its function is as follows. Probable gustatory receptor which mediates acceptance or avoidance behavior, depending on its substrates. The sequence is that of Putative gustatory receptor 89a (Gr89a) from Drosophila melanogaster (Fruit fly).